The chain runs to 157 residues: 2-C-methyl-D-erythritol 2,4-cyclodiphosphate synthase (157 aa).

A divalent metal cation-binding residues include Asp8 and His10. 4-CDP-2-C-methyl-D-erythritol 2-phosphate contacts are provided by residues 8–10 (DVH) and 34–35 (HS). His42 lines the a divalent metal cation pocket. 4-CDP-2-C-methyl-D-erythritol 2-phosphate contacts are provided by residues 56-58 (DIG), 132-135 (TTNE), and Arg142.

Belongs to the IspF family. As to quaternary structure, homotrimer. A divalent metal cation is required as a cofactor.

It catalyses the reaction 4-CDP-2-C-methyl-D-erythritol 2-phosphate = 2-C-methyl-D-erythritol 2,4-cyclic diphosphate + CMP. It functions in the pathway isoprenoid biosynthesis; isopentenyl diphosphate biosynthesis via DXP pathway; isopentenyl diphosphate from 1-deoxy-D-xylulose 5-phosphate: step 4/6. In terms of biological role, involved in the biosynthesis of isopentenyl diphosphate (IPP) and dimethylallyl diphosphate (DMAPP), two major building blocks of isoprenoid compounds. Catalyzes the conversion of 4-diphosphocytidyl-2-C-methyl-D-erythritol 2-phosphate (CDP-ME2P) to 2-C-methyl-D-erythritol 2,4-cyclodiphosphate (ME-CPP) with a corresponding release of cytidine 5-monophosphate (CMP). The polypeptide is 2-C-methyl-D-erythritol 2,4-cyclodiphosphate synthase (Chlorobium luteolum (strain DSM 273 / BCRC 81028 / 2530) (Pelodictyon luteolum)).